We begin with the raw amino-acid sequence, 518 residues long: MLAMDQGVVEEWLSEFKTLEETAVYNYAVSLKEKGSLVPALYKVIRENYSDLLEPVCHQLFEFYRSGEPRLQRFTLQFLPELVWSYLSVTAARDPHCSGCIEALLLGIYNLEIVDKDGQSKVLSFTIPSLSKPSVYHEPSSIGSLALTEGALANHGLSRVVYSGPHLQRETFTAQNRFEVLTFLLLCYNASLSYMSGSSLQSLCQLSSRVSICGYPRQQVRRYKGISSRLMVTSEFLVQLITGIHFALCNGEVDLGSKALDDVLYRAQLELFPEALLVGNAIKSSLHGASLKSNKEGTRSIQVEITPTASRISRNAVTSLSIRGHRWKRHDAVDLGSPDELTEIAEVDEGICTQASGAQSSPPTIVISSSAGGAAAGAGKLAGKGLRRLTGRSSKEKDKEKDAATGMDQLTRKQAAVRAMSENLELLSLKRLTLTASQSVPKSGSLSLSRTASAVFSRSFEQVSNVFSGNQPSSRASSPTSNHVAEQDEGVAYLDHISPAHQHRQRSPTISIHVTSDL.

Disordered regions lie at residues 385–410 and 466–492; these read GLRRLTGRSSKEKDKEKDAATGMDQL and VFSGNQPSSRASSPTSNHVAEQDEGVA. The span at 393–403 shows a compositional bias: basic and acidic residues; sequence SSKEKDKEKDA. A compositionally biased stretch (polar residues) spans 466–484; it reads VFSGNQPSSRASSPTSNHV.

Belongs to the Hyccin family. In terms of assembly, component of a phosphatidylinositol 4-kinase (PI4K) complex.

The protein localises to the cytoplasm. The protein resides in the cytosol. It localises to the cell membrane. In terms of biological role, component of a complex required to localize phosphatidylinositol 4-kinase (PI4K) to the plasma membrane. The complex acts as a regulator of phosphatidylinositol 4-phosphate (PtdIns(4)P) synthesis. The sequence is that of Hyccin (hycc1) from Danio rerio (Zebrafish).